The following is a 410-amino-acid chain: MAICSTDNELVELLWHNGGVVAQPQAAQARVVSSSGRGQSASVLTGDDTETAAWFPDTLDDALEKDLYTQLWRSVTGDAFPAAAAAGPSSHHAPPPDLPPPAARPPMRSGIGSSWTGDICSAFCGSNHIPETAAQRCRDAGAALPPERPRRSSTHDGAGTSSSGGSGSNFGASGLPSESASAHKRKGREDSDSRSEDAECEATEETKSSSRRYGSKRRTRAAEVHNLSERRRRDRINEKMRALQELIPHCNKTDKASILDEAIEYLKSLQMQVQIMWMTTGMAPMMFPGAHQFMPPMAVGMNSACMPAAQGLSHMSRLPYMNHSMPNHIPLNSSPAMNPMNVANQMQNIQLREASNPFLHPDGWQTVPPQVSGPYASGPQVAQQNQIPKASASTVLPNSGAEQPPTSDGI.

Residues 82-92 are compositionally biased toward low complexity; that stretch reads AAAAAGPSSHH. Disordered stretches follow at residues 82-110 and 137-225; these read AAAA…MRSG and CRDA…AEVH. Pro residues predominate over residues 93–104; it reads APPPDLPPPAAR. Residues 187–197 show a composition bias toward basic and acidic residues; sequence GREDSDSRSED. Over residues 209-219 the composition is skewed to basic residues; sequence SSRRYGSKRRT. The interval 220 to 233 is basic motif; sequence RAAEVHNLSERRRR. Positions 220–269 constitute a bHLH domain; it reads RAAEVHNLSERRRRDRINEKMRALQELIPHCNKTDKASILDEAIEYLKSL. The helix-loop-helix motif stretch occupies residues 234 to 269; that stretch reads DRINEKMRALQELIPHCNKTDKASILDEAIEYLKSL. Residues 357-410 form a disordered region; it reads PFLHPDGWQTVPPQVSGPYASGPQVAQQNQIPKASASTVLPNSGAEQPPTSDGI. Over residues 380 to 410 the composition is skewed to polar residues; the sequence is QVAQQNQIPKASASTVLPNSGAEQPPTSDGI.

This sequence belongs to the bHLH protein family. In terms of assembly, interacts with PRR1. Interacts with LF. Highly expressed in the node portions of the stem. Expressed in the leaves and the basal part of shoots.

It localises to the nucleus. Its function is as follows. Transcription factor that may act as negative regulator of phyB-dependent light signal transduction. Transcription activator that acts as a positive regulator of internode elongation. May function via regulation of cell wall-related genes. May play a role in a drought-associated growth-restriction mechanism in response to drought stress. This chain is Transcription factor PHYTOCHROME INTERACTING FACTOR-LIKE 13, found in Oryza sativa subsp. japonica (Rice).